Consider the following 94-residue polypeptide: Probable Fe(2+)-trafficking protein (94 aa).

The protein belongs to the Fe(2+)-trafficking protein family.

Its function is as follows. Could be a mediator in iron transactions between iron acquisition and iron-requiring processes, such as synthesis and/or repair of Fe-S clusters in biosynthetic enzymes. This chain is Probable Fe(2+)-trafficking protein, found in Haemophilus ducreyi (strain 35000HP / ATCC 700724).